Here is a 359-residue protein sequence, read N- to C-terminus: Protein-L-isoaspartate O-methyltransferase domain-containing protein 2 (359 aa).

The N-myristoyl glycine moiety is linked to residue Gly2. Residue Ser64 is part of the active site. AdoMet binding motif regions lie at residues 85–94 (LNLGSGTGYL), 160–164 (YDRVY), and 181–191 (LKVGGILVMPL). The interval 240-250 (VRSLQDLARLA) is BC-box. Residues 301 to 328 (SNPSDDTSCEDAEEDRREVAERTLQETK) form a disordered region. Basic and acidic residues predominate over residues 314–328 (EDRREVAERTLQETK). The segment at 343 to 346 (LPLP) is CUL-box.

Belongs to the methyltransferase superfamily. L-isoaspartyl/D-aspartyl protein methyltransferase family.

It is found in the cytoplasm. In terms of biological role, may act as a substrate recognition component of an ECS (Elongin BC-CUL5-SOCS-box protein) E3 ubiquitin ligase complex which mediates the ubiquitination and subsequent proteasomal degradation of target proteins. May bind to the methyltransferase cofactor S-adenosylmethionine (AdoMet) via the N-terminal AdoMet binding motif, but probably does not display methyltransferase activity. The sequence is that of Protein-L-isoaspartate O-methyltransferase domain-containing protein 2 (Pcmtd2) from Mus musculus (Mouse).